A 333-amino-acid chain; its full sequence is tRNA(Ile)-lysidine synthase (333 aa).

Ser-33 to Ser-38 is an ATP binding site.

It belongs to the tRNA(Ile)-lysidine synthase family.

Its subcellular location is the cytoplasm. The enzyme catalyses cytidine(34) in tRNA(Ile2) + L-lysine + ATP = lysidine(34) in tRNA(Ile2) + AMP + diphosphate + H(+). Functionally, ligates lysine onto the cytidine present at position 34 of the AUA codon-specific tRNA(Ile) that contains the anticodon CAU, in an ATP-dependent manner. Cytidine is converted to lysidine, thus changing the amino acid specificity of the tRNA from methionine to isoleucine. This Salinispora tropica (strain ATCC BAA-916 / DSM 44818 / JCM 13857 / NBRC 105044 / CNB-440) protein is tRNA(Ile)-lysidine synthase.